Here is a 484-residue protein sequence, read N- to C-terminus: Cholesterol 22-hydroxylase CYP90B27 (484 aa).

Residues 2-22 (ALELILVLSSLIVILIIFFSF) traverse the membrane as a helical segment. Cysteine 429 contacts heme.

It belongs to the cytochrome P450 family. In terms of tissue distribution, expressed in roots.

It localises to the membrane. It carries out the reaction cholesterol + reduced [NADPH--hemoprotein reductase] + O2 = (22R)-hydroxycholesterol + oxidized [NADPH--hemoprotein reductase] + H2O + H(+). It participates in steroid metabolism; cholesterol metabolism. Functionally, involved in the biosynthesis of steroidal saponins and alkaloids natural products from cholesterol such as spirostane-type saponins and polyphyllins, compounds with pharmacological activity. Catalyzes the C-22 hydroxylation of cholesterol to form 22R-hydroxycholesterol. In Paris polyphylla (Daiswa polyphylla), this protein is Cholesterol 22-hydroxylase CYP90B27.